The chain runs to 172 residues: Large ribosomal subunit protein uL10 (172 aa).

The protein belongs to the universal ribosomal protein uL10 family. In terms of assembly, part of the ribosomal stalk of the 50S ribosomal subunit. The N-terminus interacts with L11 and the large rRNA to form the base of the stalk. The C-terminus forms an elongated spine to which L12 dimers bind in a sequential fashion forming a multimeric L10(L12)X complex.

In terms of biological role, forms part of the ribosomal stalk, playing a central role in the interaction of the ribosome with GTP-bound translation factors. The protein is Large ribosomal subunit protein uL10 of Afipia carboxidovorans (strain ATCC 49405 / DSM 1227 / KCTC 32145 / OM5) (Oligotropha carboxidovorans).